The chain runs to 119 residues: MESKEELAANNLNGENAQQENEGREQAPTQNEETRHLGGGEGQKPGGNIRRGRVRRLVPNFRWAIPNRHIEHNEARDDVERFVGQMMEIKRKTREQQMRHYMRFQTPEPDNHYDFCLIP.

A disordered region spans residues 1 to 53 (MESKEELAANNLNGENAQQENEGREQAPTQNEETRHLGGGEGQKPGGNIRRGR). Positions 8 to 20 (AANNLNGENAQQE) are enriched in low complexity. Residues 31-89 (NEETRHLGGGEGQKPGGNIRRGRVRRLVPNFRWAIPNRHIEHNEARDDVERFVGQMMEI) form an interaction with SIRT2 region. The interval 31–119 (NEETRHLGGG…DNHYDFCLIP (89 aa)) is interaction with alpha-tubulin. Cys116 is a Zn(2+) binding site.

This sequence belongs to the BEX family. As to quaternary structure, interacts with alpha-tubulin. Interacts with SIRT2. Post-translationally, ubiquitinated and degraded by the proteasome.

The protein localises to the cytoplasm. It is found in the cytoskeleton. It localises to the spindle pole. Its subcellular location is the nucleus. Its function is as follows. May play a role in microtubule deacetylation by negatively regulating the SIRT2 deacetylase activity toward alpha-tubulin and thereby participate in the control of cell cycle progression and genomic stability. In absence of reductive stress, acts as a pseudosubstrate for the CRL2(FEM1B) complex: associates with FEM1B via zinc, thereby preventing association between FEM1B and its substrates. This chain is Protein BEX4, found in Pongo abelii (Sumatran orangutan).